The chain runs to 303 residues: MYYGFDIGGTKIALGVFDSGRQLQWEKRVPTPRDSYDAFLDAVCELVAEADQRFGCKGSVGIGIPGMPETEDGTLYAANVPAASGKPLRADLSARLDRDVRLDNDANCFALSEAWDDEFTQYPLVMGLILGTGVGGGLIFNGKPITGKSYITGEFGHMRLPVDALTMMGLDFPLRRCGCGQHGCIENYLSGRGFAWLYQHYYHQPLQAPEIIALYDQGDEQARAHVERYLDLLAVCLGNILTIVDPDLVVIGGGLSNFPAITTQLADRLPRHLLPVARVPRIERARHGDAGGMRGAAFLHLTD.

ATP is bound by residues 4–11 (GFDIGGTK) and 133–140 (GVGGGLIF). 4 residues coordinate Zn(2+): histidine 157, cysteine 177, cysteine 179, and cysteine 184.

It belongs to the ROK (NagC/XylR) family. NagK subfamily.

It catalyses the reaction N-acetyl-D-glucosamine + ATP = N-acetyl-D-glucosamine 6-phosphate + ADP + H(+). It participates in cell wall biogenesis; peptidoglycan recycling. Catalyzes the phosphorylation of N-acetyl-D-glucosamine (GlcNAc) derived from cell-wall degradation, yielding GlcNAc-6-P. The polypeptide is N-acetyl-D-glucosamine kinase (Escherichia coli (strain K12 / DH10B)).